The primary structure comprises 398 residues: Homeobox protein knotted-1-like 1 (398 aa).

3 disordered regions span residues 43–69 (TFHLQSSGGGGGGGSGDQCNFQSPGTH), 172–192 (EFEARQRSSGTSRETSKDPEL), and 234–277 (NNNA…PRAE). Residues 49-58 (SGGGGGGGSG) show a composition bias toward gly residues. The ELK domain maps to 280–300 (ELKNHLLRKYSGYLSSLKQEL). A DNA-binding region (homeobox; TALE-type) is located at residues 301–364 (SKKKKKGKLP…NQRKRHWKPS (64 aa)).

This sequence belongs to the TALE/KNOX homeobox family. Expressed only in the stems.

The protein localises to the nucleus. Its function is as follows. Probably binds to the DNA sequence 5'-TGAC-3'. The polypeptide is Homeobox protein knotted-1-like 1 (Malus domestica (Apple)).